The chain runs to 270 residues: Aliphatic sulfonates import ATP-binding protein SsuB 3 (270 aa).

In terms of domain architecture, ABC transporter spans 17–238 (LAVRKLKKAF…VRGSHRLAAL (222 aa)). 49 to 56 (GRSGCGKS) lines the ATP pocket.

It belongs to the ABC transporter superfamily. Aliphatic sulfonates importer (TC 3.A.1.17.2) family. As to quaternary structure, the complex is composed of two ATP-binding proteins (SsuB), two transmembrane proteins (SsuC) and a solute-binding protein (SsuA).

It is found in the cell inner membrane. The catalysed reaction is ATP + H2O + aliphatic sulfonate-[sulfonate-binding protein]Side 1 = ADP + phosphate + aliphatic sulfonateSide 2 + [sulfonate-binding protein]Side 1.. Functionally, part of the ABC transporter complex SsuABC involved in aliphatic sulfonates import. Responsible for energy coupling to the transport system. The protein is Aliphatic sulfonates import ATP-binding protein SsuB 3 of Pseudomonas syringae pv. syringae (strain B728a).